The following is a 46-amino-acid chain: uncharacterized protein (46 aa).

This sequence to equivalent protein in phage 82.

This is an uncharacterized protein from Escherichia coli (strain K12).